A 186-amino-acid chain; its full sequence is UPF0301 protein Swoo_1337 (186 aa).

The protein belongs to the UPF0301 (AlgH) family.

The sequence is that of UPF0301 protein Swoo_1337 from Shewanella woodyi (strain ATCC 51908 / MS32).